Consider the following 228-residue polypeptide: L-ribulose-5-phosphate 4-epimerase UlaF (228 aa).

Residues 26–27 (GN), 43–44 (SG), and 72–73 (SS) each bind substrate. Zn(2+)-binding residues include Asp-74, His-93, and His-95. The active-site Proton donor/acceptor is Asp-118. His-167 serves as a coordination point for Zn(2+). Tyr-225 (proton donor/acceptor) is an active-site residue.

This sequence belongs to the aldolase class II family. AraD/FucA subfamily. Zn(2+) is required as a cofactor.

It carries out the reaction L-ribulose 5-phosphate = D-xylulose 5-phosphate. It participates in cofactor degradation; L-ascorbate degradation; D-xylulose 5-phosphate from L-ascorbate: step 4/4. In terms of biological role, catalyzes the isomerization of L-ribulose 5-phosphate to D-xylulose 5-phosphate. Is involved in the anaerobic L-ascorbate utilization. This is L-ribulose-5-phosphate 4-epimerase UlaF from Escherichia coli O7:K1 (strain IAI39 / ExPEC).